Consider the following 347-residue polypeptide: NADH-ubiquinone oxidoreductase chain 2 (347 aa).

10 helical membrane-spanning segments follow: residues 1–21, 25–45, 59–79, 96–116, 122–142, 148–168, 200–220, 240–260, 274–294, and 325–345; these read MNPLIFSIITFTMMLGTGIVM, HWLTMWIGFEMNMLAIIPILM, YFLTQATASMLLMLAVTINLV, IILTLAMAMKLGLSPFHFWVP, VHLPSGLILLTWQKLAPMSVL, MINLDLMFTMSILSIAIGGWG, MALLNLTIYIILTTTTFLTFM, ITTIILVTMLSLGGLPPLSGF, NSIIAPTTMAITALLNLFFYM, and LLSPLTILSTMILPLSPMLML.

It belongs to the complex I subunit 2 family. In terms of assembly, core subunit of respiratory chain NADH dehydrogenase (Complex I) which is composed of 45 different subunits. Interacts with TMEM242.

It is found in the mitochondrion inner membrane. The catalysed reaction is a ubiquinone + NADH + 5 H(+)(in) = a ubiquinol + NAD(+) + 4 H(+)(out). Its function is as follows. Core subunit of the mitochondrial membrane respiratory chain NADH dehydrogenase (Complex I) which catalyzes electron transfer from NADH through the respiratory chain, using ubiquinone as an electron acceptor. Essential for the catalytic activity and assembly of complex I. The polypeptide is NADH-ubiquinone oxidoreductase chain 2 (Thoopterus nigrescens (Swift fruit bat)).